A 78-amino-acid chain; its full sequence is Acyl carrier protein (78 aa).

The 76-residue stretch at 1-76 folds into the Carrier domain; that stretch reads MSVAEKVKEI…DAISFIEKKK (76 aa). Serine 36 bears the O-(pantetheine 4'-phosphoryl)serine mark.

Belongs to the acyl carrier protein (ACP) family. 4'-phosphopantetheine is transferred from CoA to a specific serine of apo-ACP by AcpS. This modification is essential for activity because fatty acids are bound in thioester linkage to the sulfhydryl of the prosthetic group.

The protein resides in the cytoplasm. It functions in the pathway lipid metabolism; fatty acid biosynthesis. Carrier of the growing fatty acid chain in fatty acid biosynthesis. This Solidesulfovibrio magneticus (strain ATCC 700980 / DSM 13731 / RS-1) (Desulfovibrio magneticus) protein is Acyl carrier protein.